We begin with the raw amino-acid sequence, 199 residues long: Transcription regulator complex subunit bur6 (199 aa).

Residues 106 to 199 are disordered; that stretch reads PPIKAERKTK…SEASSASGDE (94 aa). Over residues 112–121 the composition is skewed to basic residues; it reads RKTKRPRARR. Positions 185 to 199 are enriched in polar residues; sequence SDKTTSEASSASGDE.

This sequence belongs to the NC2 alpha/DRAP1 family.

It is found in the nucleus. Transcription regulator complex subunit that is essential for cell cycle progression. This Schizosaccharomyces pombe (strain 972 / ATCC 24843) (Fission yeast) protein is Transcription regulator complex subunit bur6.